The chain runs to 283 residues: Thymidylate synthase (283 aa).

R22 contacts dUMP. The active-site Nucleophile is C160. Residues 180-183 (RSCD), N191, and 221-223 (HIY) each bind dUMP. Position 183 (D183) interacts with (6R)-5,10-methylene-5,6,7,8-tetrahydrofolate. Residue S282 participates in (6R)-5,10-methylene-5,6,7,8-tetrahydrofolate binding.

It belongs to the thymidylate synthase family. Bacterial-type ThyA subfamily. In terms of assembly, homodimer.

It localises to the cytoplasm. It catalyses the reaction dUMP + (6R)-5,10-methylene-5,6,7,8-tetrahydrofolate = 7,8-dihydrofolate + dTMP. It functions in the pathway pyrimidine metabolism; dTTP biosynthesis. In terms of biological role, catalyzes the reductive methylation of 2'-deoxyuridine-5'-monophosphate (dUMP) to 2'-deoxythymidine-5'-monophosphate (dTMP) while utilizing 5,10-methylenetetrahydrofolate (mTHF) as the methyl donor and reductant in the reaction, yielding dihydrofolate (DHF) as a by-product. This enzymatic reaction provides an intracellular de novo source of dTMP, an essential precursor for DNA biosynthesis. The sequence is that of Thymidylate synthase from Vibrio atlanticus (strain LGP32) (Vibrio splendidus (strain Mel32)).